The following is a 187-amino-acid chain: Dirigent protein 23 (187 aa).

Positions 1 to 24 are cleaved as a signal peptide; sequence MAKEEYVSRMLVMLIMIMPLVAQG. Asn-182 carries N-linked (GlcNAc...) asparagine glycosylation.

The protein belongs to the plant dirigent protein family. In terms of assembly, homodimer.

Its subcellular location is the secreted. The protein resides in the extracellular space. The protein localises to the apoplast. Its function is as follows. Dirigent proteins impart stereoselectivity on the phenoxy radical-coupling reaction, yielding optically active lignans from two molecules of coniferyl alcohol in the biosynthesis of lignans, flavonolignans, and alkaloids and thus plays a central role in plant secondary metabolism. This Arabidopsis thaliana (Mouse-ear cress) protein is Dirigent protein 23 (DIR23).